The primary structure comprises 97 residues: Large ribosomal subunit protein eL21 (97 aa).

Positions M1–K23 are disordered.

Belongs to the eukaryotic ribosomal protein eL21 family.

In Picrophilus torridus (strain ATCC 700027 / DSM 9790 / JCM 10055 / NBRC 100828 / KAW 2/3), this protein is Large ribosomal subunit protein eL21.